Consider the following 590-residue polypeptide: Aspartate--tRNA ligase (590 aa).

Glu-174 lines the L-aspartate pocket. An aspartate region spans residues 198–201; sequence QLMK. Residue Arg-220 participates in L-aspartate binding. Residues 220–222 and Gln-229 each bind ATP; that span reads RDE. His-443 contributes to the L-aspartate binding site. Glu-484 lines the ATP pocket. L-aspartate is bound at residue Arg-491. 536–539 serves as a coordination point for ATP; that stretch reads GLDR.

The protein belongs to the class-II aminoacyl-tRNA synthetase family. Type 1 subfamily. In terms of assembly, homodimer.

The protein localises to the cytoplasm. It catalyses the reaction tRNA(Asp) + L-aspartate + ATP = L-aspartyl-tRNA(Asp) + AMP + diphosphate. Functionally, catalyzes the attachment of L-aspartate to tRNA(Asp) in a two-step reaction: L-aspartate is first activated by ATP to form Asp-AMP and then transferred to the acceptor end of tRNA(Asp). The protein is Aspartate--tRNA ligase of Lactococcus lactis subsp. cremoris (strain MG1363).